The chain runs to 438 residues: Prenyltransferase malE (438 aa).

Glu-92 is a binding site for substrate. Arg-106, Lys-192, Tyr-194, Lys-259, Tyr-261, Tyr-346, and Tyr-411 together coordinate dimethylallyl diphosphate.

Belongs to the tryptophan dimethylallyltransferase family.

It catalyses the reaction (S)-3-(indol-3-ylmethyl)-6,7,8,8a-tetrahydropyrrolo[1,2-a]pyrazin-1-one + dimethylallyl diphosphate = (S)-3-{[2-(1,1-dimethylallyl)-indol-3-yl]methyl}-6,7,8,8a-tetrahydropyrrolo[1,2-a]pyrazin-1-one + diphosphate. The enzyme catalyses 1-hydroxy-3-(indol-3-ylmethyl)-6H,7H,8H-5lambda(5)-pyrrolo[1,2-a]pyrazine + dimethylallyl diphosphate = 1-hydroxy-3-{[2-(1,1-dimethylallyl)-indol-3-yl]methyl}-6H,7H,8H-5lambda(5)-pyrrolo[1,2-a]pyrazine + diphosphate. The protein operates within alkaloid biosynthesis. Prenyltransferase; part of the gene cluster that mediates the biosynthesis of malbrancheamide, a dichlorinated fungal indole alkaloid that belongs to a family of natural products containing a characteristic bicyclo[2.2.2]diazaoctane core. The first step of malbrancheamide biosynthesis involves coupling of L-proline and L-tryptophan by malG, a bimodular NRPS, to produce L-Pro-L-Trp aldehyde through reductive offloading. This compound undergoes spontaneous cyclization and dehydration to give a dienamine which is reverse prenylated at C-2 by malE. The other prenyltransferase present in the cluster, malB, displays modest activity, suggesting that may be a redundant gene in the pathway. Subsequently, a [4+2] Diels-Alder cyclo-addition catalyzed by the bifunctional enzyme malC forms the characteristic bicyclo[2.2.2]diazaoctane ring of premalbrancheamid. Finally, the flavin-dependent halogenase malA catalyzes the iterative dichlorination of the indole ring of premalbrancheamide to yield C-9 monochlorinated malbrancheamide B, C-8 monochlorinated isomalbrancheamide B, and dichlorinated malbrancheamide. MalA is also able to brominate premalbrancheamide at C-9 to yield malbrancheamide C, and, to a lesser extend, at C-8 to yield isomalbrancheamide C. Finally, malA can brominate C-9 monochlorinated malbrancheamide B at C-8 to yield malbrancheamide D, or C-8 monochlorinated isomalbrancheamide B at C-9 to produce isomalbrancheamide D. This is Prenyltransferase malE from Malbranchea aurantiaca.